The chain runs to 415 residues: Phosphoglycerate kinase (415 aa).

Substrate-binding positions include 27–29 (DIN), arginine 44, 67–70 (HQGR), arginine 124, and arginine 164. Residues glutamate 336 and 362–365 (GGHM) each bind ATP.

This sequence belongs to the phosphoglycerate kinase family. In terms of assembly, monomer.

The protein localises to the cytoplasm. The enzyme catalyses (2R)-3-phosphoglycerate + ATP = (2R)-3-phospho-glyceroyl phosphate + ADP. The protein operates within carbohydrate degradation; glycolysis; pyruvate from D-glyceraldehyde 3-phosphate: step 2/5. This is Phosphoglycerate kinase from Sulfurisphaera tokodaii (strain DSM 16993 / JCM 10545 / NBRC 100140 / 7) (Sulfolobus tokodaii).